Here is a 392-residue protein sequence, read N- to C-terminus: N-acetylneuraminate epimerase (392 aa).

A signal peptide spans 1–35 (MTQIYHQYKKKLSTKVILLSALTLCITFSLPYANA). 7 Kelch repeats span residues 56–100 (HLYV…VALS), 102–155 (KLYV…TTLN), 157–192 (TQAL…AVVN), 193–238 (AYFD…TAKK), 241–290 (LILI…LAGA), 312–361 (QQFN…QDKD), and 363–392 (VILL…LHLE). The active-site Proton acceptor is the Glu-247.

This sequence belongs to the NanM family. Homodimer.

It localises to the periplasm. The catalysed reaction is N-acetyl-alpha-neuraminate = N-acetyl-beta-neuraminate. Its function is as follows. Converts alpha-N-acetylneuranimic acid (Neu5Ac) to the beta-anomer, accelerating the equilibrium between the alpha- and beta-anomers. Probably facilitates sialidase-negative bacteria to compete successfully for limited amounts of extracellular Neu5Ac, which is likely taken up in the beta-anomer. In addition, the rapid removal of sialic acid from solution might be advantageous to the bacterium to damp down host responses. The chain is N-acetylneuraminate epimerase from Yersinia enterocolitica serotype O:8 / biotype 1B (strain NCTC 13174 / 8081).